Consider the following 120-residue polypeptide: NAD(P)H-quinone oxidoreductase subunit 3, chloroplastic (120 aa).

3 consecutive transmembrane segments (helical) span residues 9–29, 64–84, and 88–108; these read IFWA…LISG, MFAL…PWAM, and VLGV…ILGL.

This sequence belongs to the complex I subunit 3 family. NDH is composed of at least 16 different subunits, 5 of which are encoded in the nucleus.

Its subcellular location is the plastid. The protein resides in the chloroplast thylakoid membrane. The enzyme catalyses a plastoquinone + NADH + (n+1) H(+)(in) = a plastoquinol + NAD(+) + n H(+)(out). The catalysed reaction is a plastoquinone + NADPH + (n+1) H(+)(in) = a plastoquinol + NADP(+) + n H(+)(out). NDH shuttles electrons from NAD(P)H:plastoquinone, via FMN and iron-sulfur (Fe-S) centers, to quinones in the photosynthetic chain and possibly in a chloroplast respiratory chain. The immediate electron acceptor for the enzyme in this species is believed to be plastoquinone. Couples the redox reaction to proton translocation, and thus conserves the redox energy in a proton gradient. The protein is NAD(P)H-quinone oxidoreductase subunit 3, chloroplastic of Aethionema cordifolium (Lebanon stonecress).